Reading from the N-terminus, the 312-residue chain is Ribosomal RNA small subunit methyltransferase H (312 aa).

S-adenosyl-L-methionine is bound by residues 33–35, Asp51, Phe78, Asp97, and Gln104; that span reads GGY.

Belongs to the methyltransferase superfamily. RsmH family.

The protein localises to the cytoplasm. The enzyme catalyses cytidine(1402) in 16S rRNA + S-adenosyl-L-methionine = N(4)-methylcytidine(1402) in 16S rRNA + S-adenosyl-L-homocysteine + H(+). Functionally, specifically methylates the N4 position of cytidine in position 1402 (C1402) of 16S rRNA. The protein is Ribosomal RNA small subunit methyltransferase H of Orientia tsutsugamushi (strain Ikeda) (Rickettsia tsutsugamushi).